Here is a 206-residue protein sequence, read N- to C-terminus: dITP/XTP pyrophosphatase (206 aa).

10 to 15 (SGNAGK) provides a ligand contact to substrate. Mg(2+) contacts are provided by glutamate 40 and aspartate 69. Residue aspartate 69 is the Proton acceptor of the active site. Substrate contacts are provided by residues serine 70, 148–151 (FGYD), lysine 171, and 176–177 (HR).

Belongs to the HAM1 NTPase family. As to quaternary structure, homodimer. It depends on Mg(2+) as a cofactor.

It carries out the reaction XTP + H2O = XMP + diphosphate + H(+). The enzyme catalyses dITP + H2O = dIMP + diphosphate + H(+). The catalysed reaction is ITP + H2O = IMP + diphosphate + H(+). Its function is as follows. Pyrophosphatase that catalyzes the hydrolysis of nucleoside triphosphates to their monophosphate derivatives, with a high preference for the non-canonical purine nucleotides XTP (xanthosine triphosphate), dITP (deoxyinosine triphosphate) and ITP. Seems to function as a house-cleaning enzyme that removes non-canonical purine nucleotides from the nucleotide pool, thus preventing their incorporation into DNA/RNA and avoiding chromosomal lesions. The chain is dITP/XTP pyrophosphatase from Synechococcus sp. (strain CC9311).